The sequence spans 344 residues: Isopentenyl-diphosphate delta-isomerase (344 aa).

9-10 contributes to the substrate binding site; that stretch reads RK. FMN is bound by residues 65–67, serine 95, and asparagine 124; that span reads AMT. Substrate is bound at residue glutamine 154. Glutamate 155 is a Mg(2+) binding site. FMN is bound by residues lysine 185, threonine 215, 259–261, and 280–281; these read GVR and SG.

This sequence belongs to the IPP isomerase type 2 family. In terms of assembly, homooctamer. Dimer of tetramers. FMN serves as cofactor. It depends on NADPH as a cofactor. Mg(2+) is required as a cofactor.

Its subcellular location is the cytoplasm. It carries out the reaction isopentenyl diphosphate = dimethylallyl diphosphate. In terms of biological role, involved in the biosynthesis of isoprenoids. Catalyzes the 1,3-allylic rearrangement of the homoallylic substrate isopentenyl (IPP) to its allylic isomer, dimethylallyl diphosphate (DMAPP). The protein is Isopentenyl-diphosphate delta-isomerase of Lacticaseibacillus paracasei (strain ATCC 334 / BCRC 17002 / CCUG 31169 / CIP 107868 / KCTC 3260 / NRRL B-441) (Lactobacillus paracasei).